The following is a 653-amino-acid chain: Choline transporter-like protein 3 (653 aa).

Residues 34-54 (WLFLFFLFWTGLVFIMGYSVV) form a helical membrane-spanning segment. Residues N136 and N151 are each glycosylated (N-linked (GlcNAc...) asparagine). The next 5 membrane-spanning stretches (helical) occupy residues 213–233 (DTIL…MFTF), 243–263 (IFIS…WWLY), 284–304 (VLGF…LIFV), 334–354 (LWTF…LLSL), and 384–404 (LIGL…TIAG). Residues N412, N503, and N521 are each glycosylated (N-linked (GlcNAc...) asparagine). Helical transmembrane passes span 534 to 554 (FIIF…GLMA) and 563 to 583 (VWAV…HSFL). The disordered stretch occupies residues 632 to 653 (RAQQDKHSLRNEEGTELQAIVR). Residues 634 to 644 (QQDKHSLRNEE) are compositionally biased toward basic and acidic residues.

It belongs to the CTL (choline transporter-like) family.

It localises to the membrane. This Homo sapiens (Human) protein is Choline transporter-like protein 3 (SLC44A3).